We begin with the raw amino-acid sequence, 389 residues long: Chalcone synthase 3 (389 aa).

The active site involves Cys-164.

This sequence belongs to the thiolase-like superfamily. Chalcone/stilbene synthases family.

The enzyme catalyses (E)-4-coumaroyl-CoA + 3 malonyl-CoA + 3 H(+) = 2',4,4',6'-tetrahydroxychalcone + 3 CO2 + 4 CoA. It functions in the pathway secondary metabolite biosynthesis; flavonoid biosynthesis. Its function is as follows. The primary product of this enzyme is 4,2',4',6'-tetrahydroxychalcone (also termed naringenin-chalcone or chalcone) which can under specific conditions spontaneously isomerize into naringenin. In Trifolium subterraneum (Subterranean clover), this protein is Chalcone synthase 3 (CHS3).